The primary structure comprises 545 residues: Putative transcription factor ecdB (545 aa).

Residues 12 to 39 (CDACRSRRVKCDGQRPSCMGCLSRGLDC) constitute a DNA-binding region (zn(2)-C6 fungal-type). The disordered stretch occupies residues 79 to 99 (PPPVLLASARPSSNPLSSHED).

It is found in the nucleus. The polypeptide is Putative transcription factor ecdB (Aspergillus rugulosus (Emericella rugulosa)).